Consider the following 27-residue polypeptide: Cupiennin-3c (27 aa).

As to expression, expressed by the venom gland.

Its subcellular location is the secreted. The chain is Cupiennin-3c from Cupiennius salei (American wandering spider).